A 306-amino-acid chain; its full sequence is Ribosomal RNA small subunit methyltransferase H (306 aa).

S-adenosyl-L-methionine-binding positions include 33 to 35 (GGY), Asp-51, Phe-78, Asp-96, and Gln-103.

Belongs to the methyltransferase superfamily. RsmH family.

The protein resides in the cytoplasm. The enzyme catalyses cytidine(1402) in 16S rRNA + S-adenosyl-L-methionine = N(4)-methylcytidine(1402) in 16S rRNA + S-adenosyl-L-homocysteine + H(+). Specifically methylates the N4 position of cytidine in position 1402 (C1402) of 16S rRNA. The chain is Ribosomal RNA small subunit methyltransferase H from Rickettsia felis (strain ATCC VR-1525 / URRWXCal2) (Rickettsia azadi).